The primary structure comprises 512 residues: ETS translocation variant 3 (512 aa).

The ETS DNA-binding region spans 35–116 (IQLWHFILEL…KGKRFTYKFN (82 aa)). The disordered stretch occupies residues 136–222 (VPQSAPPVPT…NAIGGGGIGH (87 aa)). A phosphoserine mark is found at Ser-139, Ser-159, and Ser-315. The span at 158–184 (HSPTNDVQPGRFSASSLTASGQESSNG) shows a compositional bias: polar residues. The interval 336–512 (PEESTQFSIK…QGLATAAADA (177 aa)) is disordered. 3 stretches are compositionally biased toward basic and acidic residues: residues 380-406 (IKVE…HTQE), 453-468 (DRPG…KEDA), and 479-491 (RWND…ELSK). Lys-381 participates in a covalent cross-link: Glycyl lysine isopeptide (Lys-Gly) (interchain with G-Cter in SUMO2). Lys-388 bears the N6-acetyllysine; alternate mark. Residue Lys-388 forms a Glycyl lysine isopeptide (Lys-Gly) (interchain with G-Cter in SUMO2); alternate linkage.

Belongs to the ETS family.

The protein localises to the nucleus. Functionally, transcriptional repressor that contribute to growth arrest during terminal macrophage differentiation by repressing target genes involved in Ras-dependent proliferation. Represses MMP1 promoter activity. The polypeptide is ETS translocation variant 3 (ETV3) (Homo sapiens (Human)).